Consider the following 1834-residue polypeptide: Sodium channel protein type 4 subunit alpha (1834 aa).

The Cytoplasmic segment spans residues 1 to 131 (MASSSLPNLV…RSAIKVLIHS (131 aa)). The I repeat unit spans residues 113–448 (MLSPFSIIRR…VVTMAYAEQN (336 aa)). The chain crosses the membrane as a helical span at residues 132–150 (LFSMFIMITILPNCVVMTM). Topologically, residues 151 to 157 (SDPPPWP) are extracellular. Residues 158–178 (IHVENTFTGINTFESLIKMLA) form a helical membrane-spanning segment. At 179–192 (RGFCIDDFTFLRDP) the chain is on the cytoplasmic side. Residues 193–210 (WNWLDFSVIMMAYLTEFV) traverse the membrane as a helical segment. Residues 211-216 (DLGNIS) lie on the Extracellular side of the membrane. N-linked (GlcNAc...) asparagine glycosylation is present at Asn214. A helical membrane pass occupies residues 217 to 233 (ALRTFRVLRALKTITVI). Over 234-252 (PGLKTIVGALIQSVKKLSD) the chain is Cytoplasmic. Residues 253–272 (VMILTVFCLSVFALVGLQLF) traverse the membrane as a helical segment. The Extracellular portion of the chain corresponds to 273 to 385 (MGNLRQKCVR…PNYGYTSHDT (113 aa)). Cys280 and Cys354 are oxidised to a cystine. N-linked (GlcNAc...) asparagine glycans are attached at residues Asn288, Asn291, Asn297, Asn303, Asn309, Asn327, and Asn356. A disulfide bridge connects residues Cys363 and Cys369. Positions 386–410 (FSWAFLALFRLMIQDYWENLFQLTL) form an intramembrane region, pore-forming. Over 411–417 (RAAGKTY) the chain is Extracellular. A helical membrane pass occupies residues 418–438 (MIFFVVIIFLGSFYLINLILA). At 439–572 (VVTMAYAEQN…NIIHLIVMDP (134 aa)) the chain is on the cytoplasmic side. Residues 486–525 (EGGEAGGDPAHSKDCNGSLDTSPGEKGPPRQSCSADSGVS) are disordered. Residues 554 to 826 (CCTPWVKFKN…QISSWPIKLG (273 aa)) form an II repeat. The chain crosses the membrane as a helical span at residues 573-591 (FVDLGITICIVLNTLFMAM). The Extracellular portion of the chain corresponds to 592–602 (EHYPMTEHFDK). Residues 603-622 (VLTVGNLVFTGIFTAEMVLK) traverse the membrane as a helical segment. The Cytoplasmic portion of the chain corresponds to 623-636 (LIALDPYEYFQQGW). Residues 637–656 (NVFDSIIVTLSWVELGLVNV) form a helical membrane-spanning segment. Residues 657–658 (KG) lie on the Extracellular side of the membrane. A helical transmembrane segment spans residues 659-676 (LSVLRSFRLVRSLKLAKS). Residues 677-692 (WPTLNMFIRIIGNSGG) lie on the Cytoplasmic side of the membrane. A helical membrane pass occupies residues 693 to 711 (GLGNLTLVLAIIVVNFSVV). Residues 712–740 (GMQLFGKNYKECVCKNASDCALPRWKMCD) lie on the Extracellular side of the membrane. The cysteines at positions 725 and 731 are disulfide-linked. The segment at residues 741-761 (FFHSFLIVLRILCGEWIEPMW) is an intramembrane region (pore-forming). At 762–772 (GFMEVAGQAMF) the chain is on the extracellular side. Residues 773-791 (LTVLLMVMVNGNLVDLDLF) form a helical membrane-spanning segment. Residues 792–1029 (LALLLNPLNS…ACFKIVEHHW (238 aa)) lie on the Cytoplasmic side of the membrane. 2 disordered regions span residues 853-886 (GDPG…KDLK) and 929-989 (SDLE…QPEE). Residues 860–869 (EAGEAEESAP) show a composition bias toward acidic residues. The span at 870–886 (EDEKKEPPPEDDDKDLK) shows a compositional bias: basic and acidic residues. Composition is skewed to acidic residues over residues 929–945 (SDLE…FSEP) and 972–989 (EDPE…QPEE). The stretch at 1010–1323 (RGKMWWTLRR…KKYYNAMKKL (314 aa)) is one III repeat. A helical membrane pass occupies residues 1030–1047 (FKTFNSSLILLNSGTLAF). Over 1048 to 1060 (EDIYIEQRRVIRT) the chain is Extracellular. A helical membrane pass occupies residues 1061–1079 (ILEYADKVFTYIFIMEMLL). Residues 1080 to 1093 (KWVAYGFKVYFTNA) are Cytoplasmic-facing. A helical membrane pass occupies residues 1094 to 1112 (WCWLDFLIVDVSIISLVAN). Topologically, residues 1113–1120 (WLGYSELG) are extracellular. A helical transmembrane segment spans residues 1121–1139 (PIKSLRTLRALRPLRALSR). At 1140 to 1156 (FEGMRVVVNALLGAIPS) the chain is on the cytoplasmic side. The helical transmembrane segment at 1157 to 1176 (IMNVLLVCLIFWVIFSIMGV) threads the bilayer. Residues 1177-1227 (NLFAAKIYYFINTTTSERFDISGVNNKSECESLIHTGQVRWLNVKVNYDNV) lie on the Extracellular side of the membrane. Asn1188 and Asn1202 each carry an N-linked (GlcNAc...) asparagine glycan. Residues 1228–1249 (GLGYLSLLQVATFKGWMDIMYS) constitute an intramembrane region (pore-forming). Residues 1250–1266 (AVDSREQEEQPQYEVNI) are Extracellular-facing. Residues 1267 to 1288 (YMYLYFVIFIIFGSFFTINSLI) traverse the membrane as a helical segment. The Cytoplasmic segment spans residues 1289 to 1351 (RLIIVNFNQQ…MVYDFVTKQV (63 aa)). Residues 1307–1309 (IFM) form an important for rapid channel inactivation region. Residues 1332–1630 (IPRPQNKIQG…WEKFGPDATQ (299 aa)) form an IV repeat. A helical transmembrane segment spans residues 1352 to 1369 (FDITIMILICLNMVTMMV). Residues 1370–1380 (ETDDQSQLKVD) lie on the Extracellular side of the membrane. The chain crosses the membrane as a helical span at residues 1381-1399 (ILYNINMVFIIVFTGECVL). Residues 1400 to 1411 (KMFALRQNYFTV) lie on the Cytoplasmic side of the membrane. Residues 1412–1429 (GWNIFDFVVVILSIVGLA) form a helical membrane-spanning segment. Topologically, residues 1430–1442 (LSDLIQKYFVSPT) are extracellular. Residues 1443–1459 (LFRVIRLARIGRVLRLI) traverse the membrane as a helical segment. Over 1460 to 1478 (RGAKGIRTLLFALMMSLPA) the chain is Cytoplasmic. The helical transmembrane segment at 1479 to 1496 (LFNIGLLLILVMFIYSIF) threads the bilayer. At 1497–1518 (GMSNFAYVKKESGIDDMFNFET) the chain is on the extracellular side. Residues 1519 to 1541 (FGNSIICLFEITTSAGWDGLLNP) constitute an intramembrane region (pore-forming). Over 1542–1571 (ILNSGPPDCDPTLENPGTSVRGDCGNPSIG) the chain is Extracellular. An intrachain disulfide couples Cys1550 to Cys1565. Residues 1572–1594 (ICFFCSYIIISFLIVVNMYIAII) form a helical membrane-spanning segment. Residues 1595–1834 (LENFNVATEE…LHPGVKESLV (240 aa)) are Cytoplasmic-facing. In terms of domain architecture, IQ spans 1724–1753 (EEVCAIKIQRAYRRHLLQRSVKQASYMYRH). The interval 1776-1834 (MYGRENGNSGVQNKGEERGSTGDAGPTMGLTPINPSDSALPPSPPPGLPLHPGVKESLV) is disordered.

It belongs to the sodium channel (TC 1.A.1.10) family. Nav1.4/SCN4A subfamily. The Nav1.4 voltage-gated sodium channel consists of an ion-conducting alpha subunit SCN4A which is functional on its own and a regulatory beta subunit SCN1B. SCN1B strongly enhances the presence of SCN4A at the cell surface. SCN1B is also required for rapid channel inactivation and recovery after inactivation. It prevents the decrease of channel activity in response to repetitive, high-frequency depolarizations. Interacts with the syntrophins SNTA1, SNTB1 and SNTB2 (via PDZ domain); probably links SCN4A to the actin cytoskeleton and the extracellular matrix via the dystrophin-associated protein complex and regulates its localization in muscle cells. Interacts with TMEM233; probable regulator of the channel.

The protein resides in the cell membrane. It carries out the reaction Na(+)(in) = Na(+)(out). In terms of biological role, pore-forming subunit of Nav1.4, a voltage-gated sodium (Nav) channel that directly mediates the depolarizing phase of action potentials in excitable membranes. Navs, also called VGSCs (voltage-gated sodium channels) or VDSCs (voltage-dependent sodium channels), operate by switching between closed and open conformations depending on the voltage difference across the membrane. In the open conformation they allow Na(+) ions to selectively pass through the pore, along their electrochemical gradient. The influx of Na+ ions provokes membrane depolarization, initiating the propagation of electrical signals throughout cells and tissues. Highly expressed in skeletal muscles, Nav1.4 generates the action potential crucial for muscle contraction. This Equus caballus (Horse) protein is Sodium channel protein type 4 subunit alpha.